Here is a 101-residue protein sequence, read N- to C-terminus: Protein RnfH (101 aa).

It belongs to the UPF0125 (RnfH) family.

The chain is Protein RnfH from Coxiella burnetii (strain CbuK_Q154) (Coxiella burnetii (strain Q154)).